Consider the following 845-residue polypeptide: Beta-galactosidase 11 (845 aa).

The N-terminal stretch at 1–26 (MRKHSLDRWLLTAVLVVLLSSSSSFA) is a signal peptide. N104 carries N-linked (GlcNAc...) asparagine glycosylation. E197 functions as the Proton donor in the catalytic mechanism. E268 (nucleophile) is an active-site residue. N269, N300, N395, N752, N784, and N814 each carry an N-linked (GlcNAc...) asparagine glycan. An SUEL-type lectin domain is found at 751 to 840 (DNVSLTATLK…KMLAVQVKCG (90 aa)).

The protein belongs to the glycosyl hydrolase 35 family.

The protein resides in the secreted. The protein localises to the extracellular space. It is found in the apoplast. It catalyses the reaction Hydrolysis of terminal non-reducing beta-D-galactose residues in beta-D-galactosides.. The chain is Beta-galactosidase 11 (BGAL11) from Arabidopsis thaliana (Mouse-ear cress).